The chain runs to 252 residues: Geranylgeranylglyceryl phosphate synthase (252 aa).

Residues Asp-25 and Ser-54 each coordinate Mg(2+). Residues Phe-174–Gly-180, Gly-205–Gly-206, and Gly-227–Asn-228 each bind sn-glycerol 1-phosphate.

It belongs to the GGGP/HepGP synthase family. Group II subfamily. Homohexamer. Requires Mg(2+) as cofactor.

It catalyses the reaction sn-glycerol 1-phosphate + (2E,6E,10E)-geranylgeranyl diphosphate = sn-3-O-(geranylgeranyl)glycerol 1-phosphate + diphosphate. Prenyltransferase that catalyzes the transfer of the geranylgeranyl moiety of geranylgeranyl diphosphate (GGPP) to the C3 hydroxyl of sn-glycerol-1-phosphate (G1P). This chain is Geranylgeranylglyceryl phosphate synthase, found in Chitinophaga pinensis (strain ATCC 43595 / DSM 2588 / LMG 13176 / NBRC 15968 / NCIMB 11800 / UQM 2034).